Consider the following 196-residue polypeptide: Lipoprotein signal peptidase (196 aa).

Residues 1 to 24 are disordered; it reads MAEAERIIGMPENPDVDGTDEGGS. Transmembrane regions (helical) follow at residues 40–60, 92–112, and 118–138; these read ILAL…SKML, IGEA…VVIF, and LYSL…LGNL. Active-site residues include Asp-155 and Asp-169. The chain crosses the membrane as a helical span at residues 164 to 184; it reads VFNLADSAIVCGGILIVILSF.

It belongs to the peptidase A8 family.

It localises to the cell membrane. The catalysed reaction is Release of signal peptides from bacterial membrane prolipoproteins. Hydrolyzes -Xaa-Yaa-Zaa-|-(S,diacylglyceryl)Cys-, in which Xaa is hydrophobic (preferably Leu), and Yaa (Ala or Ser) and Zaa (Gly or Ala) have small, neutral side chains.. Its pathway is protein modification; lipoprotein biosynthesis (signal peptide cleavage). In terms of biological role, this protein specifically catalyzes the removal of signal peptides from prolipoproteins. This Streptomyces griseus subsp. griseus (strain JCM 4626 / CBS 651.72 / NBRC 13350 / KCC S-0626 / ISP 5235) protein is Lipoprotein signal peptidase.